The chain runs to 772 residues: NAD(P)H-quinone oxidoreductase subunit 5, chloroplastic (772 aa).

15 consecutive transmembrane segments (helical) span residues 8 to 28, 39 to 59, 87 to 107, 120 to 140, 147 to 167, 185 to 205, 219 to 239, 258 to 278, 291 to 311, 395 to 415, 425 to 445, 574 to 594, 631 to 651, 710 to 730, and 738 to 758; these read IWIVPVCPFVASMSVGLGLFF, ICAIISIFLLGIAMFISFSIF, FLIDPLTSTMLVSVTSVGILV, GYVRFFAYLSLFTASMLGLVL, IYIFWELVGMCSYLLIGFWFS, GDFGLLLGILGTYWITGSFDI, NGVNLFLANMCALLLFLGPAA, TPISALIHAATMVAAGIFFVA, MNIISWVGGITALLGATIALA, GTTFLLGTLSLCGIPPFACFW, WIASASLGWIAWCTAGLTGFY, LFSLISLAIPTLFIGFIGVPF, IPSVSIALVGVSISFFIYGPV, WIIDGIVNGIGILSFFGGEGM, and IPSYLFGLIIGNILMLIILII.

It belongs to the complex I subunit 5 family. NDH is composed of at least 16 different subunits, 5 of which are encoded in the nucleus.

It is found in the plastid. It localises to the chloroplast thylakoid membrane. The enzyme catalyses a plastoquinone + NADH + (n+1) H(+)(in) = a plastoquinol + NAD(+) + n H(+)(out). It catalyses the reaction a plastoquinone + NADPH + (n+1) H(+)(in) = a plastoquinol + NADP(+) + n H(+)(out). Functionally, NDH shuttles electrons from NAD(P)H:plastoquinone, via FMN and iron-sulfur (Fe-S) centers, to quinones in the photosynthetic chain and possibly in a chloroplast respiratory chain. The immediate electron acceptor for the enzyme in this species is believed to be plastoquinone. Couples the redox reaction to proton translocation, and thus conserves the redox energy in a proton gradient. This Angiopteris evecta (Mule's foot fern) protein is NAD(P)H-quinone oxidoreductase subunit 5, chloroplastic (ndhF).